The primary structure comprises 601 residues: MSTPLDHIRNFSIVAHIDHGKSTLADRLIQSTGGLELRDMKEQVLDSMDIERERGITIKAQTVRLKYRANNGEDYILNLIDTPGHVDFAYEVSRSLAACEGSLLVVDASQGVEAQTLANVYQAIDNNHEIVVVLNKVDLPAAEPERIREQVEEVIGIDASGAVLISAKTGLGIPDVLEAIVHQLPPPREGDATAPLKAMLVDSWYDAYLGVIVLVRIIDGVLKKGQTIRMMGTGAKYLVERTGVFTPARINVDELGPGEFGFFTGSIKEVADTRVGDTITEDKRPTAQALPGFKPAQPVVFCGLFPVDAADFEDLRAAVGKLRLNDASFSYEMETSAALGFGYRCGFLGLLHLEIIQERLEREFNLDLIATAPSVVYRLLLNDGSVKELHNPADMPDVVKISAIEEPWIRATILTPDDYLGGILKLCQDRRGIQADLSYVGKRAMLTYDLPLNEVVFDFYDRLKSISKGYASFDYHLTDYREGDLVKMSILVNEEPVDALSMLVHRTAAEKRGRQMCEKLKELIPHHLFKIPIQAAIGGKVIARETISALRKDVTAKCYGGDVSRKRKLLDKQKEGKKRMRQFGKVDIPQEAFIQALKMGD.

The tr-type G domain maps to 6–188 (DHIRNFSIVA…AIVHQLPPPR (183 aa)). GTP is bound by residues 18 to 23 (DHGKST) and 135 to 138 (NKVD).

It belongs to the TRAFAC class translation factor GTPase superfamily. Classic translation factor GTPase family. LepA subfamily.

It localises to the cell inner membrane. The enzyme catalyses GTP + H2O = GDP + phosphate + H(+). Required for accurate and efficient protein synthesis under certain stress conditions. May act as a fidelity factor of the translation reaction, by catalyzing a one-codon backward translocation of tRNAs on improperly translocated ribosomes. Back-translocation proceeds from a post-translocation (POST) complex to a pre-translocation (PRE) complex, thus giving elongation factor G a second chance to translocate the tRNAs correctly. Binds to ribosomes in a GTP-dependent manner. The chain is Elongation factor 4 from Mesorhizobium japonicum (strain LMG 29417 / CECT 9101 / MAFF 303099) (Mesorhizobium loti (strain MAFF 303099)).